Reading from the N-terminus, the 492-residue chain is SH2 domain-containing adapter protein E (492 aa).

4 disordered regions span residues 46–193, 214–236, 260–332, and 347–384; these read TASE…DKAK, KRTK…EPYD, LDGP…EQPW, and FEGS…KVDP. The residue at position 103 (Ser103) is a Phosphoserine. Over residues 149–158 the composition is skewed to basic and acidic residues; that stretch reads IKVDTQEKNG. Low complexity predominate over residues 168–184; that stretch reads TSSSSSSSSSASSSPSS. Basic and acidic residues-rich tracts occupy residues 214–227, 268–285, 306–332, 349–361, and 373–383; these read KRTK…RVGE, ETVK…KDLL, AEVK…EQPW, GSDR…DAGR, and LSDHGDGEKVD. An SH2 domain is found at 393 to 488; that stretch reads WYHGSISRAE…AEHMTLLHPV (96 aa).

Expressed in heart, brain, lung and skeletal muscle.

This is SH2 domain-containing adapter protein E (She) from Mus musculus (Mouse).